A 648-amino-acid chain; its full sequence is Transcription termination factor FttA (648 aa).

Residues 1–179 (MIKRETQVDQ…QVGRNIYRKP (179 aa)) form a not required for dimerization, required for cleavage at some sites region. The tract at residues 9–76 (DQILKDIRGI…ISIRPDPDVL (68 aa)) is KHa. A KHb region spans residues 77–144 (LPPEEAEKLI…WAPKVVRTPP (68 aa)). The segment at 185-395 (WIRITGLGGF…LVMESTYGGA (211 aa)) is metallo-beta-lactamase N-terminus. Residues His253, His255, Asp257, His258, His341, and Asp364 each coordinate Zn(2+). Residues 396–589 (NDIQMPREEA…MEVHTIDGFS (194 aa)) are beta-Casp. The tract at residues 590-648 (GHADRRELMNYVAKVRPRPERVITVHGEPQKCLDLATSIHRKFGLSTRAPNNLDTIRLR) is metallo-beta-lactamase C-terminus. Zn(2+) is bound at residue His615.

The protein belongs to the metallo-beta-lactamase superfamily. RNA-metabolizing metallo-beta-lactamase-like family. FttA subfamily. In terms of assembly, homodimer. Interacts with RNA polymerase (RNAP), interacts with the Spt4-Spt5 complex. It depends on Zn(2+) as a cofactor.

EndoRNase activity is inhibited by 1,10-phenanthroline. In terms of biological role, terminates transcription on the whole genome. Termination is linked to FttA-mediated RNA cleavage and does not require NTP hydrolysis. Cleaves endonucleolytically at the RNA exit channel of RNA polymerase (RNAP); the 5'-3' exonuclease activity of this protein degrades the nascent RNA released from RNAP. Its function is as follows. A single-stranded endoribonuclease (endoRNase) with a preference for cleavage at CA dinucleotides. Has 5'-3' exoribonuclease (exoRNase) activity on 5'-monophosphorylated RNA; this activity does not occur on 5'-tri-phosphorylated or 5'-OH substrates. Also has weak activity 5'-3' exodeoxyribonuclease activity on ssDNA. The sequence is that of Transcription termination factor FttA from Pyrococcus abyssi (strain GE5 / Orsay).